Reading from the N-terminus, the 376-residue chain is 23S rRNA (uracil(747)-C(5))-methyltransferase RlmC (376 aa).

Positions 3, 11, 14, and 87 each coordinate [4Fe-4S] cluster. 4 residues coordinate S-adenosyl-L-methionine: Gln-212, Phe-241, Glu-262, and Asn-307. The Nucleophile role is filled by Cys-334.

The protein belongs to the class I-like SAM-binding methyltransferase superfamily. RNA M5U methyltransferase family. RlmC subfamily.

It catalyses the reaction uridine(747) in 23S rRNA + S-adenosyl-L-methionine = 5-methyluridine(747) in 23S rRNA + S-adenosyl-L-homocysteine + H(+). Functionally, catalyzes the formation of 5-methyl-uridine at position 747 (m5U747) in 23S rRNA. The protein is 23S rRNA (uracil(747)-C(5))-methyltransferase RlmC of Yersinia pseudotuberculosis serotype I (strain IP32953).